Here is a 147-residue protein sequence, read N- to C-terminus: MTTEDRVEIYTDGACKGNPGPGGWGALMRYKGKEKELFGGERGTTNNRMEIMAVIRALAALNRPCKVVVYTDSQYVQKGISEWIHGWKARGWKTAAKEPVKNADLWQQLDAERNRHLDVEWRWVKGHAGHEFNERADQLANKGVESV.

Residues 3-145 (TEDRVEIYTD…ADQLANKGVE (143 aa)) form the RNase H type-1 domain. Asp12, Glu50, Asp72, and Asp137 together coordinate Mg(2+).

The protein belongs to the RNase H family. In terms of assembly, monomer. It depends on Mg(2+) as a cofactor.

Its subcellular location is the cytoplasm. The enzyme catalyses Endonucleolytic cleavage to 5'-phosphomonoester.. Functionally, endonuclease that specifically degrades the RNA of RNA-DNA hybrids. The polypeptide is Ribonuclease H (Chromobacterium violaceum (strain ATCC 12472 / DSM 30191 / JCM 1249 / CCUG 213 / NBRC 12614 / NCIMB 9131 / NCTC 9757 / MK)).